Here is a 100-residue protein sequence, read N- to C-terminus: MDLTPREKDKLLLFTAGLLAERRKAKGLKLNHPEAVALISCAIMEGAREGRSVAEMMDAGGQVLTREDVMEGVAEMIPEVQVEATFPDGVKLVTVHEPIR.

The protein belongs to the urease gamma subunit family. As to quaternary structure, heterotrimer of UreA (gamma), UreB (beta) and UreC (alpha) subunits. Three heterotrimers associate to form the active enzyme.

It is found in the cytoplasm. It catalyses the reaction urea + 2 H2O + H(+) = hydrogencarbonate + 2 NH4(+). It participates in nitrogen metabolism; urea degradation; CO(2) and NH(3) from urea (urease route): step 1/1. The sequence is that of Urease subunit gamma from Alkalilimnicola ehrlichii (strain ATCC BAA-1101 / DSM 17681 / MLHE-1).